We begin with the raw amino-acid sequence, 127 residues long: Aspartate 1-decarboxylase (127 aa).

S25 functions as the Schiff-base intermediate with substrate; via pyruvic acid in the catalytic mechanism. Residue S25 is modified to Pyruvic acid (Ser). Position 57 (T57) interacts with substrate. The active-site Proton donor is the Y58. Residue 73–75 (GAA) coordinates substrate.

The protein belongs to the PanD family. As to quaternary structure, heterooctamer of four alpha and four beta subunits. Pyruvate is required as a cofactor. Is synthesized initially as an inactive proenzyme, which is activated by self-cleavage at a specific serine bond to produce a beta-subunit with a hydroxyl group at its C-terminus and an alpha-subunit with a pyruvoyl group at its N-terminus.

The protein resides in the cytoplasm. The enzyme catalyses L-aspartate + H(+) = beta-alanine + CO2. It functions in the pathway cofactor biosynthesis; (R)-pantothenate biosynthesis; beta-alanine from L-aspartate: step 1/1. Catalyzes the pyruvoyl-dependent decarboxylation of aspartate to produce beta-alanine. The chain is Aspartate 1-decarboxylase from Listeria innocua serovar 6a (strain ATCC BAA-680 / CLIP 11262).